Here is a 229-residue protein sequence, read N- to C-terminus: Peptide methionine sulfoxide reductase B3, chloroplastic (229 aa).

The N-terminal 71 residues, Met1 to Cys71, are a transit peptide targeting the chloroplast. Residues Glu102 to Ala223 form the MsrB domain. 4 residues coordinate Zn(2+): Cys141, Cys144, Cys187, and Cys190. Cysteines 159 and 212 form a disulfide. The Nucleophile role is filled by Cys212.

The protein belongs to the MsrB Met sulfoxide reductase family. It depends on Zn(2+) as a cofactor.

The protein localises to the plastid. The protein resides in the chloroplast. It catalyses the reaction L-methionyl-[protein] + [thioredoxin]-disulfide + H2O = L-methionyl-(R)-S-oxide-[protein] + [thioredoxin]-dithiol. In terms of biological role, catalyzes the reduction of methionine sulfoxide (MetSO) to methionine in proteins. Plays a protective role against oxidative stress by restoring activity to proteins that have been inactivated by methionine oxidation. MSRB family specifically reduces the MetSO R-enantiomer. The chain is Peptide methionine sulfoxide reductase B3, chloroplastic (MSRB3) from Oryza sativa subsp. japonica (Rice).